Reading from the N-terminus, the 281-residue chain is Radiation response metalloprotease IrrE (281 aa).

Residue histidine 82 participates in Zn(2+) binding. Residue glutamate 83 is part of the active site. Histidine 86 and glutamate 113 together coordinate Zn(2+). The tract at residues leucine 262–serine 281 is disordered. Positions serine 267–serine 281 are enriched in basic and acidic residues.

In terms of assembly, interacts with DdrOC.

Protease activity is inhibited by EDTA. Functionally, plays a central regulatory role in DNA repair and protection pathways in response to radiation stress. Acts as a site-specific metalloprotease that cleaves and inactivates the repressor proteins DdrOC and DdrOP3, resulting in induced expression of genes required for DNA repair and cell survival after exposure to radiation. This is Radiation response metalloprotease IrrE from Deinococcus deserti (strain DSM 17065 / CIP 109153 / LMG 22923 / VCD115).